The following is a 344-amino-acid chain: Phosphoribosylformylglycinamidine cyclo-ligase (344 aa).

The protein belongs to the AIR synthase family.

It is found in the cytoplasm. It carries out the reaction 2-formamido-N(1)-(5-O-phospho-beta-D-ribosyl)acetamidine + ATP = 5-amino-1-(5-phospho-beta-D-ribosyl)imidazole + ADP + phosphate + H(+). Its pathway is purine metabolism; IMP biosynthesis via de novo pathway; 5-amino-1-(5-phospho-D-ribosyl)imidazole from N(2)-formyl-N(1)-(5-phospho-D-ribosyl)glycinamide: step 2/2. The polypeptide is Phosphoribosylformylglycinamidine cyclo-ligase (Laribacter hongkongensis (strain HLHK9)).